The primary structure comprises 315 residues: Taste receptor type 2 member 3 (315 aa).

Residues 1–5 are Extracellular-facing; it reads MGLTE. Residues 6–26 form a helical membrane-spanning segment; sequence GLFLILSGTQFALGILVNCFI. Topologically, residues 27-41 are cytoplasmic; that stretch reads GLVNGSSWFKTKRMS. The chain crosses the membrane as a helical span at residues 42 to 62; that stretch reads LSDFIITTLAFLRIILLCIIL. Topologically, residues 63–93 are extracellular; the sequence is TDSFLIEFSPNAHDSGVIMQIIDVSWTFTNH. A helical transmembrane segment spans residues 94–114; it reads LSIWLATCLGVLYCLKIASFS. The Cytoplasmic portion of the chain corresponds to 115 to 127; the sequence is HPTFLWLKWRVSR. A helical membrane pass occupies residues 128–148; that stretch reads VMVWMLLGVLLLSCGSTASLI. Over 149–185 the chain is Extracellular; it reads NEFKLYSVFRGIEATXNVTEHFRKKRSEYYLIHVLGT. Asparagine 165 carries an N-linked (GlcNAc...) asparagine glycan. A helical membrane pass occupies residues 186–206; that stretch reads LWYLPPLIVSLAAYFLLIFSL. At 207-233 the chain is on the cytoplasmic side; sequence GRHTRQMLQNGTSSRDPSTEAHKRAIR. The chain crosses the membrane as a helical span at residues 234-254; it reads IILSSFFLFLLYFLAFLIASF. The Extracellular segment spans residues 255-265; the sequence is GNFLPKTKMAK. A helical membrane pass occupies residues 266-286; the sequence is MIGEVMTMFYPAGHSFILILG. Over 287-315 the chain is Cytoplasmic; the sequence is NSKLKQTFVEMLRCESGHLKPGSKGPIFS.

This sequence belongs to the G-protein coupled receptor T2R family.

It is found in the membrane. In terms of biological role, gustducin-coupled receptor implicated in the perception of bitter compounds in the oral cavity and the gastrointestinal tract. Signals through PLCB2 and the calcium-regulated cation channel TRPM5. This Pongo pygmaeus (Bornean orangutan) protein is Taste receptor type 2 member 3 (TAS2R3).